The primary structure comprises 333 residues: Dihydroorotate dehydrogenase (quinone) (333 aa).

Residues 56–60 (AGLDK) and Thr-80 each bind FMN. Lys-60 serves as a coordination point for substrate. 105–109 (NRMGF) serves as a coordination point for substrate. 2 residues coordinate FMN: Asn-133 and Asn-166. Asn-166 serves as a coordination point for substrate. The active-site Nucleophile is Ser-169. A substrate-binding site is contributed by Asn-171. 2 residues coordinate FMN: Lys-211 and Thr-239. 240 to 241 (NT) contributes to the substrate binding site. FMN contacts are provided by residues Gly-262, Gly-291, and 312–313 (YS).

Belongs to the dihydroorotate dehydrogenase family. Type 2 subfamily. Monomer. FMN is required as a cofactor.

It localises to the cell membrane. The enzyme catalyses (S)-dihydroorotate + a quinone = orotate + a quinol. It functions in the pathway pyrimidine metabolism; UMP biosynthesis via de novo pathway; orotate from (S)-dihydroorotate (quinone route): step 1/1. Catalyzes the conversion of dihydroorotate to orotate with quinone as electron acceptor. The sequence is that of Dihydroorotate dehydrogenase (quinone) from Legionella pneumophila (strain Corby).